A 137-amino-acid polypeptide reads, in one-letter code: Ribosome-binding factor A (137 aa).

The segment at 112-137 (KKDEVKEDESHEDESTDHTEETNEEP) is disordered. Residues 127–137 (TDHTEETNEEP) show a composition bias toward basic and acidic residues.

Belongs to the RbfA family. Monomer. Binds 30S ribosomal subunits, but not 50S ribosomal subunits or 70S ribosomes.

Its subcellular location is the cytoplasm. In terms of biological role, one of several proteins that assist in the late maturation steps of the functional core of the 30S ribosomal subunit. Associates with free 30S ribosomal subunits (but not with 30S subunits that are part of 70S ribosomes or polysomes). Required for efficient processing of 16S rRNA. May interact with the 5'-terminal helix region of 16S rRNA. This Coprothermobacter proteolyticus (strain ATCC 35245 / DSM 5265 / OCM 4 / BT) protein is Ribosome-binding factor A.